Consider the following 326-residue polypeptide: Vitamin B12 import system permease protein BtuC (326 aa).

9 helical membrane passes run 19–39, 61–81, 88–108, 112–132, 146–166, 184–204, 240–260, 274–294, and 302–322; these read LSVL…LWIL, LAVL…QALF, PGLL…VLLG, LPNW…TLIL, LLAG…AIYF, GGVD…LLWI, GWMV…GLVI, VLLP…DIVA, and ELPI…WLLL.

The protein belongs to the binding-protein-dependent transport system permease family. FecCD subfamily. The complex is composed of two ATP-binding proteins (BtuD), two transmembrane proteins (BtuC) and a solute-binding protein (BtuF).

It is found in the cell inner membrane. Part of the ABC transporter complex BtuCDF involved in vitamin B12 import. Involved in the translocation of the substrate across the membrane. The sequence is that of Vitamin B12 import system permease protein BtuC from Escherichia coli O127:H6 (strain E2348/69 / EPEC).